The primary structure comprises 331 residues: Ornithine carbamoyltransferase (331 aa).

Carbamoyl phosphate contacts are provided by residues 55-58, glutamine 82, arginine 106, and 133-136; these read STRT and HPTQ. L-ornithine contacts are provided by residues asparagine 166, aspartate 230, and 234 to 235; that span reads SM. Residues 272–273 and arginine 317 each bind carbamoyl phosphate; that span reads CL.

Belongs to the aspartate/ornithine carbamoyltransferase superfamily. OTCase family.

It localises to the cytoplasm. It catalyses the reaction carbamoyl phosphate + L-ornithine = L-citrulline + phosphate + H(+). Its pathway is amino-acid biosynthesis; L-arginine biosynthesis; L-arginine from L-ornithine and carbamoyl phosphate: step 1/3. Its function is as follows. Reversibly catalyzes the transfer of the carbamoyl group from carbamoyl phosphate (CP) to the N(epsilon) atom of ornithine (ORN) to produce L-citrulline. The sequence is that of Ornithine carbamoyltransferase (argF) from Neisseria meningitidis serogroup A / serotype 4A (strain DSM 15465 / Z2491).